The primary structure comprises 274 residues: Large ribosomal subunit protein bL28m (274 aa).

Positions 249–274 (SETEEFGLGQEEDLFMKEEPKPTKMA) are disordered. Residues 262 to 274 (LFMKEEPKPTKMA) show a composition bias toward basic and acidic residues.

Belongs to the bacterial ribosomal protein bL28 family. In terms of assembly, component of the mitochondrial large ribosomal subunit (mt-LSU). Mature N.crassa 74S mitochondrial ribosomes consist of a small (37S) and a large (54S) subunit. The 37S small subunit contains a 16S ribosomal RNA (16S mt-rRNA) and 32 different proteins. The 54S large subunit contains a 23S rRNA (23S mt-rRNA) and 42 different proteins.

The protein resides in the mitochondrion. Functionally, component of the mitochondrial ribosome (mitoribosome), a dedicated translation machinery responsible for the synthesis of mitochondrial genome-encoded proteins, including at least some of the essential transmembrane subunits of the mitochondrial respiratory chain. The mitoribosomes are attached to the mitochondrial inner membrane and translation products are cotranslationally integrated into the membrane. The sequence is that of Large ribosomal subunit protein bL28m (mrpl24) from Neurospora crassa (strain ATCC 24698 / 74-OR23-1A / CBS 708.71 / DSM 1257 / FGSC 987).